A 190-amino-acid chain; its full sequence is Iron-sulfur protein (190 aa).

One can recognise a 4Fe-4S ferredoxin-type 1 domain in the interval 8–36; the sequence is VIIYANPDHCLSCHSCELACAVAHSGGHD. Cysteine 17, cysteine 20, cysteine 23, cysteine 27, cysteine 65, cysteine 68, cysteine 73, cysteine 77, cysteine 96, cysteine 99, cysteine 102, cysteine 106, cysteine 133, cysteine 136, cysteine 150, and cysteine 154 together coordinate [4Fe-4S] cluster. 4Fe-4S ferredoxin-type domains follow at residues 87–116 and 133–164; these read GQVQIVEQHCIGCKLCVMVCPFGAITVRSE and CDLCVDWRASTGKTAPACVEACPTKAIRMVDL.

Its function is as follows. The carbon monoxide dehydrogenase (CODH) oxidizes carbon monoxide coupled, via CooF, to the reduction of a hydrogen cation by a hydrogenase (probably CooH). CooF is required in stoichiometric amounts in vitro for anchoring CODH to the membrane as well as for conveying the electrons to the hydrogenase. The protein is Iron-sulfur protein (cooF) of Rhodospirillum rubrum.